Reading from the N-terminus, the 283-residue chain is (+)-borneol dehydrogenase 2 (283 aa).

NAD(+) is bound by residues 27 to 33 (GGSSGIG), aspartate 51, 76 to 77 (DV), and 103 to 105 (NAG). Serine 157 acts as the Proton donor in catalysis. Residues tyrosine 170, lysine 174, and threonine 205 each contribute to the NAD(+) site. Tyrosine 170 (proton acceptor) is an active-site residue. Lysine 174 functions as the Proton donor/acceptor in the catalytic mechanism.

The protein belongs to the short-chain dehydrogenases/reductases (SDR) family.

It catalyses the reaction (1R,2S,4R)-borneol + NAD(+) = (1R,4R)-camphor + NADH + H(+). In terms of biological role, involved in the biosynthesis of monoterpene natural products related to camphor. Catalayzes the oxidation of (+)-borneol to (+)-camphor. Shows absolute selectivity towards (+)-borneol. Catalyzes the oxidation of (+)-isoborneol to (-)-camphor. Shows absolute selectivity towards (+)-isoborneol. The protein is (+)-borneol dehydrogenase 2 of Salvia officinalis (Sage).